The following is an 830-amino-acid chain: Periplasmic nitrate reductase (830 aa).

Residues M1–N30 constitute a signal peptide (tat-type signal). The 4Fe-4S Mo/W bis-MGD-type domain maps to L40–D96. The [4Fe-4S] cluster site is built by C47, C50, C54, and C82. Mo-bis(molybdopterin guanine dinucleotide) is bound by residues K84, Q151, N176, C180, W213–M220, S244–H248, M374, Q378, N484, S510–E511, K533, D560, and T720–S729. W796 is a substrate binding site. Residues N804 and K821 each coordinate Mo-bis(molybdopterin guanine dinucleotide).

The protein belongs to the prokaryotic molybdopterin-containing oxidoreductase family. NasA/NapA/NarB subfamily. In terms of assembly, component of the periplasmic nitrate reductase NapAB complex composed of NapA and NapB. [4Fe-4S] cluster is required as a cofactor. Mo-bis(molybdopterin guanine dinucleotide) serves as cofactor. Predicted to be exported by the Tat system. The position of the signal peptide cleavage has not been experimentally proven.

It localises to the periplasm. The catalysed reaction is 2 Fe(II)-[cytochrome] + nitrate + 2 H(+) = 2 Fe(III)-[cytochrome] + nitrite + H2O. Its function is as follows. Catalytic subunit of the periplasmic nitrate reductase complex NapAB. Receives electrons from NapB and catalyzes the reduction of nitrate to nitrite. This is Periplasmic nitrate reductase from Hahella chejuensis (strain KCTC 2396).